A 91-amino-acid polypeptide reads, in one-letter code: Probable Fe(2+)-trafficking protein (91 aa).

The protein belongs to the Fe(2+)-trafficking protein family.

Its function is as follows. Could be a mediator in iron transactions between iron acquisition and iron-requiring processes, such as synthesis and/or repair of Fe-S clusters in biosynthetic enzymes. The protein is Probable Fe(2+)-trafficking protein of Tolumonas auensis (strain DSM 9187 / NBRC 110442 / TA 4).